Here is a 100-residue protein sequence, read N- to C-terminus: Small ribosomal subunit protein bS20 (100 aa).

A compositionally biased stretch (basic and acidic residues) spans 1–18; sequence MPNKKSAEKRVRQSEQRR. The interval 1-26 is disordered; sequence MPNKKSAEKRVRQSEQRRQKNRGYQK.

Belongs to the bacterial ribosomal protein bS20 family.

Functionally, binds directly to 16S ribosomal RNA. The protein is Small ribosomal subunit protein bS20 of Petrotoga mobilis (strain DSM 10674 / SJ95).